A 62-amino-acid chain; its full sequence is Large ribosomal subunit protein bL32 (62 aa).

The span at 1–19 shows a compositional bias: basic residues; sequence MPNPKRRHSKARTGNRRAH. A disordered region spans residues 1–23; that stretch reads MPNPKRRHSKARTGNRRAHDHLS.

This sequence belongs to the bacterial ribosomal protein bL32 family.

In Koribacter versatilis (strain Ellin345), this protein is Large ribosomal subunit protein bL32.